Reading from the N-terminus, the 310-residue chain is U-megalopygitoxin(8)-Mo15 (310 aa).

The first 27 residues, 1 to 27, serve as a signal peptide directing secretion; the sequence is MARFSSKNLTKLFQYLVLSLLSPVAFG.

It belongs to the megalysin family. Contains 3 disulfide bonds. In terms of tissue distribution, expressed by the venom apparatus.

It localises to the secreted. Its subcellular location is the target cell membrane. May function as a large pore-forming protein. In Megalopyge opercularis (Southern flannel moth), this protein is U-megalopygitoxin(8)-Mo15.